We begin with the raw amino-acid sequence, 89 residues long: Small ribosomal subunit protein uS14 (89 aa).

This sequence belongs to the universal ribosomal protein uS14 family. As to quaternary structure, part of the 30S ribosomal subunit. Contacts proteins S3 and S10.

Binds 16S rRNA, required for the assembly of 30S particles and may also be responsible for determining the conformation of the 16S rRNA at the A site. In Flavobacterium psychrophilum (strain ATCC 49511 / DSM 21280 / CIP 103535 / JIP02/86), this protein is Small ribosomal subunit protein uS14.